The following is a 1292-amino-acid chain: (E3-independent) E2 ubiquitin-conjugating enzyme (1292 aa).

Pro residues predominate over residues 1-37 (MADPAAPTPAAPAPAQAPAPAPEAVPAPAAAPVPAPA). Disordered stretches follow at residues 1 to 56 (MADP…EAGS) and 85 to 114 (EDSD…EGRA). Residues 38–56 (PASDSASGPSSDSGPEAGS) are compositionally biased toward low complexity. 5 positions are modified to phosphoserine: Ser-50, Ser-87, Ser-89, Ser-399, and Ser-401. Disordered stretches follow at residues 401–459 (SPDT…AGEQ), 472–519 (RLHS…IPLS), and 714–746 (IEES…TDNG). Basic and acidic residues predominate over residues 406–427 (CSRDHSMEDPDKKGESKTKSEA). Ser-441 carries the phosphoserine modification. Over residues 478-490 (QDADDEAADDTDD) the composition is skewed to acidic residues. 2 positions are modified to phosphothreonine: Thr-488 and Thr-491. Positions 491 to 510 (TSSVTSSASSTTSSQSGSGT) are enriched in low complexity. The short motif at 512–536 (RKKSIPLSIKNLKRKHKRKKNKITR) is the Nuclear localization signal element. A Phosphoserine modification is found at Ser-515. Residues 732 to 742 (DEWEDDSDSWE) show a composition bias toward acidic residues. Positions 812–882 (RELKEAIKIL…IVEEEKMEAV (71 aa)) form a coiled coil. At Ser-836 the chain carries Phosphoserine. Thr-838 bears the Phosphothreonine mark. Residue Ser-839 is modified to Phosphoserine. A compositionally biased stretch (basic and acidic residues) spans 882 to 893 (VPDVERKEDKPE). The tract at residues 882–903 (VPDVERKEDKPEGQSPVKAEWP) is disordered. Ser-896 carries the post-translational modification Phosphoserine. In terms of domain architecture, UBC core spans 953-1113 (KFFSTVRKEM…ALIRVVQSMT (161 aa)). Residue Cys-1040 is the Glycyl thioester intermediate of the active site. The disordered stretch occupies residues 1160–1248 (NGVPKASSSP…KSYRSFLPEK (89 aa)).

It belongs to the ubiquitin-conjugating enzyme family. In terms of assembly, interacts with CPNE1 (via VWFA domain) and CPNE4 (via VWFA domain). Interacts with UBR2. Post-translationally, phosphorylated. Phosphorylation affects subcellular location. In terms of processing, ubiquitinated: autoubiquitinates, possibly affecting its subcellular location. As to expression, predominantly expressed in skeletal muscle and heart.

It localises to the cytoplasm. The protein resides in the nucleus. The catalysed reaction is S-ubiquitinyl-[E1 ubiquitin-activating enzyme]-L-cysteine + [acceptor protein]-L-lysine = [E1 ubiquitin-activating enzyme]-L-cysteine + N(6)-monoubiquitinyl-[acceptor protein]-L-lysine.. The protein operates within protein modification; protein ubiquitination. Its activity is regulated as follows. inhibited by phenylarsine oxide (PAO). E2/E3 hybrid ubiquitin-protein ligase that displays both E2 and E3 ligase activities and mediates monoubiquitination of target proteins. Negatively regulates TRAF6-mediated NF-kappa-B activation independently of its E2 activity. Acts as a positive regulator of BMP7 signaling by mediating monoubiquitination of SMAD6, thereby regulating adipogenesis. Mediates monoubiquitination at different sites of the nuclear localization signal (NLS) of BAP1, leading to cytoplasmic retention of BAP1. Also able to monoubiquitinate the NLS of other chromatin-associated proteins, such as INO80 and CXXC1, affecting their subcellular location. Acts as a regulator of retrograde transport by assisting the TRIM27:MAGEL2 E3 ubiquitin ligase complex to mediate 'Lys-63'-linked ubiquitination of WASHC1, leading to promote endosomal F-actin assembly. This chain is (E3-independent) E2 ubiquitin-conjugating enzyme (UBE2O), found in Homo sapiens (Human).